The chain runs to 513 residues: Probable E3 ubiquitin-protein ligase XBOS34 (513 aa).

3 ANK repeats span residues 39–69 (EGKTPLMVASMRPDLINVVQVLIELGANVNA), 75–104 (YCGTALHHAAKKGLEQTVHLLLSHGANPFI), and 108–137 (DCHTALDLAREKGHVNVVRAIEGRISLFCG). Polar residues-rich tracts occupy residues 309–327 (ITTTTATNDWGNPPSNSLN) and 335–355 (SAPSKTSGQVPVVTSSSSTYN). Disordered stretches follow at residues 309 to 378 (ITTT…QNST) and 423 to 455 (SADGGTAVSSAKPAENEGDAKPAESDANASNSG). Low complexity predominate over residues 361–378 (GTSSGQSSSKHNKSQNST). Positions 436–446 (AENEGDAKPAE) are enriched in basic and acidic residues. The RING-type zinc finger occupies 462–501 (CVICLDAPVEGACIPCGHMAGCMSCLKDIESKKWGCPICR).

The enzyme catalyses S-ubiquitinyl-[E2 ubiquitin-conjugating enzyme]-L-cysteine + [acceptor protein]-L-lysine = [E2 ubiquitin-conjugating enzyme]-L-cysteine + N(6)-ubiquitinyl-[acceptor protein]-L-lysine.. It participates in protein modification; protein ubiquitination. The protein is Probable E3 ubiquitin-protein ligase XBOS34 (XBOS34) of Oryza sativa subsp. japonica (Rice).